We begin with the raw amino-acid sequence, 454 residues long: tRNA-2-methylthio-N(6)-dimethylallyladenosine synthase (454 aa).

One can recognise an MTTase N-terminal domain in the interval 6–122 (RRYHITTFGC…LKDLLESVFA (117 aa)). Residues cysteine 15, cysteine 51, cysteine 85, cysteine 157, cysteine 161, and cysteine 164 each coordinate [4Fe-4S] cluster. A Radical SAM core domain is found at 143–380 (RDSTVTAWVN…NHLVNVKAAE (238 aa)). The TRAM domain occupies 383–447 (QRYMGRIEEV…AFSLTGEPIE (65 aa)).

The protein belongs to the methylthiotransferase family. MiaB subfamily. As to quaternary structure, monomer. The cofactor is [4Fe-4S] cluster.

Its subcellular location is the cytoplasm. It carries out the reaction N(6)-dimethylallyladenosine(37) in tRNA + (sulfur carrier)-SH + AH2 + 2 S-adenosyl-L-methionine = 2-methylsulfanyl-N(6)-dimethylallyladenosine(37) in tRNA + (sulfur carrier)-H + 5'-deoxyadenosine + L-methionine + A + S-adenosyl-L-homocysteine + 2 H(+). Catalyzes the methylthiolation of N6-(dimethylallyl)adenosine (i(6)A), leading to the formation of 2-methylthio-N6-(dimethylallyl)adenosine (ms(2)i(6)A) at position 37 in tRNAs that read codons beginning with uridine. The sequence is that of tRNA-2-methylthio-N(6)-dimethylallyladenosine synthase from Nostoc sp. (strain PCC 7120 / SAG 25.82 / UTEX 2576).